Here is a 248-residue protein sequence, read N- to C-terminus: ATP synthase subunit a, chloroplastic (248 aa).

A run of 5 helical transmembrane segments spans residues 38–58, 96–116, 135–155, 200–220, and 221–241; these read QVLITSWIVIAVLLGSATLAV, VPFIGTMFLFIFVSNWAGALF, INTTVALALLTSVAYFYAGFT, LVVAVLVSLVPIVVPIPVMFL, and GLFTSGIQALIFATLAAAYIG.

The protein belongs to the ATPase A chain family. F-type ATPases have 2 components, CF(1) - the catalytic core - and CF(0) - the membrane proton channel. CF(1) has five subunits: alpha(3), beta(3), gamma(1), delta(1), epsilon(1). CF(0) has four main subunits: a, b, b' and c.

It localises to the plastid. Its subcellular location is the chloroplast thylakoid membrane. Its function is as follows. Key component of the proton channel; it plays a direct role in the translocation of protons across the membrane. The polypeptide is ATP synthase subunit a, chloroplastic (Cryptomeria japonica (Japanese cedar)).